The chain runs to 280 residues: UDP-3-O-acyl-N-acetylglucosamine deacetylase (280 aa).

Zn(2+) contacts are provided by H79, H237, and D241. H264 (proton donor) is an active-site residue.

This sequence belongs to the LpxC family. Requires Zn(2+) as cofactor.

It carries out the reaction a UDP-3-O-[(3R)-3-hydroxyacyl]-N-acetyl-alpha-D-glucosamine + H2O = a UDP-3-O-[(3R)-3-hydroxyacyl]-alpha-D-glucosamine + acetate. The protein operates within glycolipid biosynthesis; lipid IV(A) biosynthesis; lipid IV(A) from (3R)-3-hydroxytetradecanoyl-[acyl-carrier-protein] and UDP-N-acetyl-alpha-D-glucosamine: step 2/6. Catalyzes the hydrolysis of UDP-3-O-myristoyl-N-acetylglucosamine to form UDP-3-O-myristoylglucosamine and acetate, the committed step in lipid A biosynthesis. The protein is UDP-3-O-acyl-N-acetylglucosamine deacetylase of Chlamydia caviae (strain ATCC VR-813 / DSM 19441 / 03DC25 / GPIC) (Chlamydophila caviae).